The following is a 213-amino-acid chain: Octanoyltransferase (213 aa).

Residues 35-213 enclose the BPL/LPL catalytic domain; that stretch reads DKHGDAVLLL…ERHLPTLVGA (179 aa). Substrate-binding positions include 73–80, 145–147, and 158–160; these read RGGKITWH, AIG, and GFS. Cysteine 176 serves as the catalytic Acyl-thioester intermediate.

It belongs to the LipB family.

It localises to the cytoplasm. It carries out the reaction octanoyl-[ACP] + L-lysyl-[protein] = N(6)-octanoyl-L-lysyl-[protein] + holo-[ACP] + H(+). It participates in protein modification; protein lipoylation via endogenous pathway; protein N(6)-(lipoyl)lysine from octanoyl-[acyl-carrier-protein]: step 1/2. Functionally, catalyzes the transfer of endogenously produced octanoic acid from octanoyl-acyl-carrier-protein onto the lipoyl domains of lipoate-dependent enzymes. Lipoyl-ACP can also act as a substrate although octanoyl-ACP is likely to be the physiological substrate. The polypeptide is Octanoyltransferase (Salinispora arenicola (strain CNS-205)).